The primary structure comprises 285 residues: Tropomyosin alpha-3 chain (285 aa).

Residues 1–285 (MMEAIKKKMQ…DHALNDMTSI (285 aa)) are a coiled coil. Met2 carries the post-translational modification N-acetylmethionine. Position 2 is an N-acetylalanine (Met2). Over residues 16–41 (KENALDRAEQAEAEQKQAEERSKQLE) the composition is skewed to basic and acidic residues. The segment at 16–44 (KENALDRAEQAEAEQKQAEERSKQLEDEL) is disordered. Thr54 carries the post-translational modification Phosphothreonine. A phosphoserine mark is found at Ser62 and Ser88. Thr109 bears the Phosphothreonine mark. 2 positions are modified to N6-acetyllysine: Glu125 and Leu177. Ser207 carries the post-translational modification Phosphoserine. Tyr215 is modified (N6-acetyllysine). At Ser216 the chain carries Phosphoserine. Thr253 carries the phosphothreonine modification. Tyr262 is subject to Phosphotyrosine. Ser272 bears the Phosphoserine mark. Thr283 bears the Phosphothreonine mark. At Ser284 the chain carries Phosphoserine.

The protein belongs to the tropomyosin family. In terms of assembly, homodimer. Heterodimer of an alpha (TPM1, TPM3 or TPM4) and a beta (TPM2) chain. Interacts with TMOD1. Interacts with TNNT1.

The protein localises to the cytoplasm. It localises to the cytoskeleton. In terms of biological role, binds to actin filaments in muscle and non-muscle cells. Plays a central role, in association with the troponin complex, in the calcium dependent regulation of vertebrate striated muscle contraction. Smooth muscle contraction is regulated by interaction with caldesmon. In non-muscle cells is implicated in stabilizing cytoskeleton actin filaments. The sequence is that of Tropomyosin alpha-3 chain (TPM3) from Homo sapiens (Human).